The primary structure comprises 312 residues: Phosphatidate cytidylyltransferase (312 aa).

The segment at 1–31 is disordered; that stretch reads MASTDPGTGTPLDESVPGIKRAMRQSTKNTP. 8 helical membrane passes run 37–57, 58–78, 85–105, 110–130, 157–177, 186–206, 223–243, and 247–267; these read LPAA…TLVF, APRI…HEVV, GYVI…WLTW, VGAL…RLVM, ATVF…LLVY, FCLM…GVLF, GFAG…TFLA, and PWVG…GDLV.

The protein belongs to the CDS family.

The protein localises to the cell membrane. It carries out the reaction a 1,2-diacyl-sn-glycero-3-phosphate + CTP + H(+) = a CDP-1,2-diacyl-sn-glycerol + diphosphate. It participates in phospholipid metabolism; CDP-diacylglycerol biosynthesis; CDP-diacylglycerol from sn-glycerol 3-phosphate: step 3/3. This Mycobacterium leprae (strain TN) protein is Phosphatidate cytidylyltransferase (cdsA).